We begin with the raw amino-acid sequence, 114 residues long: uncharacterized protein (114 aa).

Positions 18-29 are enriched in basic residues; the sequence is TRKRNSHKKVTK. Disordered regions lie at residues 18-47 and 65-108; these read TRKR…RRTG and SRPR…KLLN. Positions 30-41 are enriched in basic and acidic residues; it reads RAVEKRKQDSTR.

This is an uncharacterized protein from Homo sapiens (Human).